A 699-amino-acid chain; its full sequence is Methylcrotonoyl-CoA carboxylase subunit alpha, mitochondrial (699 aa).

A Biotin carboxylation domain is found at 30–475 (ITKILIANRG…ETGFIPIHRE (446 aa)). 3 residues coordinate ATP: lysine 144, glutamate 228, and histidine 263. The 198-residue stretch at 148–345 (KDIMIKAGVP…LVEWQLKVAE (198 aa)) folds into the ATP-grasp domain. Residue arginine 320 is part of the active site. Positions 624–699 (KGADGVLGSL…EDKKTLAVIV (76 aa)) constitute a Biotinyl-binding domain. The residue at position 665 (lysine 665) is an N6-biotinyllysine.

Probably a dodecamer composed of six biotin-containing alpha subunits and six beta subunits. It depends on Mn(2+) as a cofactor. Biotin is required as a cofactor.

It is found in the mitochondrion matrix. The enzyme catalyses 3-methylbut-2-enoyl-CoA + hydrogencarbonate + ATP = 3-methyl-(2E)-glutaconyl-CoA + ADP + phosphate + H(+). Its pathway is amino-acid degradation; L-leucine degradation; (S)-3-hydroxy-3-methylglutaryl-CoA from 3-isovaleryl-CoA: step 2/3. Functionally, biotin-attachment subunit of the 3-methylcrotonyl-CoA carboxylase, an enzyme that catalyzes the conversion of 3-methylcrotonyl-CoA to 3-methylglutaconyl-CoA, a critical step for leucine and isovaleric acid catabolism. This chain is Methylcrotonoyl-CoA carboxylase subunit alpha, mitochondrial (mccA), found in Dictyostelium discoideum (Social amoeba).